We begin with the raw amino-acid sequence, 1430 residues long: MGKEQELVQAVKAEDVGTAQRLLQRPRPGKAKLLGSTKKINVNFQDPDGFSALHHAALNGNTELISLLLEAQAAVDIKDNKGMRPLHYAAWQGRKEPMKLVLKAGSAVNVPSDEGHIPLHLAAQHGHYDVSEMLLQHQSNPCIVDNSGKTPLDLACEFGRVGVVQLLLSSNMCAALLEPRPGDTTDPNGTSPLHLAAKNGHIDIIRLLLQAGIDINRQTKSGTALHEAALCGKTEVVRLLLDSGINAQVRNTYSQTALDIVHQFTTSQASKEIKQLLREASAALQVRATKDYCNNYDLTSLNVKAGDIITVLEQHPDGRWKGCIHDNRTGNDRVGYFPSSLGEAIVKRAGSRTGSEPSPPQGGGSLGPSAPPEEIWVLRKPFAGGDRSGSLSNVAGGRSTGGHALHAGAEGVKLLATVLSQKSVSESSPGDSPVKPPEGSSGAARSQPPAAHAGQVYGEQPPKKLESSSASEGKSAEAVSQWLATFQLQLYAPNFTSAGYDLPTISRMTPEDLTAIGVTKPGHRKKITAEISGLNIPDCLPEHKPANLAVWLSMIGLAQYYKVLVDNGYENIDFITDITWEDLQEIGITKLGHQKKLMLAVRKLAELQKAEYSKYEGGPLRRKAPQSLEMMAIESPPPSEPAAAECQSPKMTTFQDSELSGELQAALSGPAEAGAAAAEKSSNHLPATPRTTSRQESSLSGRARHMSSSQELLGDGPQGPGSPMSRSQEYLLDEGPAPGTPPKEVRSSRHGHSVKRASVPPVPGKPRQVLPSGVSHFTPPQTPTKAQPGSPQALGGPHGPATAKVKPTPQLLPPTDRPMSPRSLPQSPTHRGFAYVLPQPVEGEAGPPAPGPVPPPVPAAVPTLCLPPEADVEPRRPKKRAHSLNRYAASDSEPERDELLVPAAAGPYATVQRRVGRSHSVRAPAGTDKNVNRSQSFAVRPRKKGPPPPPPKRSSSAMASANLADEPSPDVETEDGRLGVRAQRRRASDLAGSVDTGSAGSVKSIAAMLELSSIGGGGRAIRRPPEGHPTPRPASPDPGRVATVLASVKHKEAIGPDGEVVNRRRTLSGPVTGLLATARRGPGEPAEQSHFMEDGTARQRLRGPAKGEAGVEGPPLARVEASATLKRRIRAKQSQQENVKFILTESDTVKRRPKAKEPDIGPEPPPPLSVYQNGTATIRRRPASEQAGPPELPPPPPPAEPPPTDLMPLPPLPLPDGSARKPVKPPVSPKPILAQPVSKIQGSPTPASKKVPLPGPGSPEVKRAHGTPPPVSPKPPPPPTAPKPAKALAGLQSSSATPSPVPSPARQPPAALIKPASSPPSQSASPAKPPSPGAPALQVPTKPPRAAASVVSGPPVASDCASPGDSARQKLEETSACLAAALQAVEEKIRQEDGQGPRPSSIEEKSTGSILEDIGSMFDDLADQLDAMLE.

ANK repeat units lie at residues 48 to 77 (DGFS…AVDI), 81 to 110 (KGMR…AVNV), 114 to 143 (EGHI…NPCI), 147 to 176 (SGKT…CAAL), 188 to 217 (NGTS…DINR), and 220 to 249 (KSGT…NAQV). A Phosphotyrosine modification is found at Y253. The region spanning 281–347 (SAALQVRATK…PSSLGEAIVK (67 aa)) is the SH3 domain. The disordered stretch occupies residues 348–372 (RAGSRTGSEPSPPQGGGSLGPSAPP). Phosphoserine is present on S358. The tract at residues 375–471 (IWVLRKPFAG…PKKLESSSAS (97 aa)) is CASK-binding. R398 carries the omega-N-methylarginine modification. Residues 421–430 (QKSVSESSPG) show a composition bias toward polar residues. The disordered stretch occupies residues 421–472 (QKSVSESSPGDSPVKPPEGSSGAARSQPPAAHAGQVYGEQPPKKLESSSASE). S423 and S432 each carry phosphoserine. 2 SAM domains span residues 474-537 (KSAE…LNIP) and 543-607 (HKPA…LAEL). Phosphoserine occurs at positions 635 and 648. The segment covering 667 to 679 (LSGPAEAGAAAAE) has biased composition (low complexity). Disordered regions lie at residues 667–1001 (LSGP…SAGS), 1015–1040 (GGGG…DPGR), 1055–1371 (GPDG…RQKL), and 1388–1407 (KIRQ…EKST). The segment covering 683–711 (NHLPATPRTTSRQESSLSGRARHMSSSQE) has biased composition (polar residues). S722 and S727 each carry phosphoserine. The residue at position 740 (T740) is a Phosphothreonine. A Phosphoserine modification is found at S790. A compositionally biased stretch (pro residues) spans 847-859 (PPAPGPVPPPVPA). S890, S892, and S988 each carry phosphoserine. Residues 1027-1036 (GHPTPRPASP) show a composition bias toward pro residues. Phosphothreonine is present on T1066. The residue at position 1068 (S1068) is a Phosphoserine. Residues 1147-1159 (DTVKRRPKAKEPD) are compositionally biased toward basic and acidic residues. Residues 1190 to 1214 (PELPPPPPPAEPPPTDLMPLPPLPL) are compositionally biased toward pro residues. S1258 carries the phosphoserine modification. T1267 bears the Phosphothreonine mark. Positions 1267–1282 (TPPPVSPKPPPPPTAP) are enriched in pro residues. 3 stretches are compositionally biased toward low complexity: residues 1283-1298 (KPAK…SATP), 1308-1326 (PPAA…SASP), and 1344-1358 (PRAA…PVAS). Phosphoserine is present on S1362. Residues 1388–1406 (KIRQEDGQGPRPSSIEEKS) show a composition bias toward basic and acidic residues.

As to quaternary structure, polymerizes, via the tandem SAM domains, to form long, 8 nM wide fibers, upon which other proteins can assemble. Binds the CaM kinase domain of CASK. Forms a ternary complex with CASK and LIN7A, LIN7B or LIN7C. Competes with APBA1 that forms a similar complex with CASK and LIN7 proteins. The tripartite complex CASKIN1/CASK/LIN7(A/B/C) binds the cytoplasmic tail of NRXN1. In terms of tissue distribution, expressed in brain. Localized primarily to the neuropil and enriched in synaptic areas (at protein level).

The protein resides in the cytoplasm. May link the scaffolding protein CASK to downstream intracellular effectors. This is Caskin-1 (Caskin1) from Rattus norvegicus (Rat).